The sequence spans 151 residues: Large ribosomal subunit protein eL19 (151 aa).

Residues 57 to 81 (KKGISSARVKKLKEQRKKGRRRGPG) are compositionally biased toward basic residues. Residues 57–95 (KKGISSARVKKLKEQRKKGRRRGPGSRRGAAGARTPPKE) are disordered.

The protein belongs to the eukaryotic ribosomal protein eL19 family. In terms of assembly, part of the 50S ribosomal subunit.

In terms of biological role, binds to the 23S rRNA. This Methanocaldococcus jannaschii (strain ATCC 43067 / DSM 2661 / JAL-1 / JCM 10045 / NBRC 100440) (Methanococcus jannaschii) protein is Large ribosomal subunit protein eL19.